A 225-amino-acid polypeptide reads, in one-letter code: E3 ubiquitin-protein ligase ATL59 (225 aa).

Residues 22–42 traverse the membrane as a helical segment; sequence FTFIVCVPICVILIVLLVLYI. The segment at 97–139 adopts an RING-type; atypical zinc-finger fold; sequence CSVCLGDYQAEEKLQQMPSCGHTFHMECIDLWLTSHTTCPLCR.

This sequence belongs to the RING-type zinc finger family. ATL subfamily.

It is found in the membrane. The catalysed reaction is S-ubiquitinyl-[E2 ubiquitin-conjugating enzyme]-L-cysteine + [acceptor protein]-L-lysine = [E2 ubiquitin-conjugating enzyme]-L-cysteine + N(6)-ubiquitinyl-[acceptor protein]-L-lysine.. It participates in protein modification; protein ubiquitination. E3 ubiquitin-protein ligase able to catalyze polyubiquitination with ubiquitin-conjugating enzyme E2 UBC8, UBC10, UBC11, and UBC34 in vitro. The chain is E3 ubiquitin-protein ligase ATL59 (ATL59) from Arabidopsis thaliana (Mouse-ear cress).